The sequence spans 246 residues: Probable transcriptional regulatory protein APJL_1171 (246 aa).

This sequence belongs to the TACO1 family.

It localises to the cytoplasm. This chain is Probable transcriptional regulatory protein APJL_1171, found in Actinobacillus pleuropneumoniae serotype 3 (strain JL03).